A 336-amino-acid chain; its full sequence is Adenosine deaminase (336 aa).

His15 and His17 together coordinate Zn(2+). Substrate contacts are provided by His17, Asp19, and Gly172. Residue His199 coordinates Zn(2+). The Proton donor role is filled by Glu202. Residue Asp279 coordinates Zn(2+).

The protein belongs to the metallo-dependent hydrolases superfamily. Adenosine and AMP deaminases family. Adenosine deaminase subfamily. It depends on Zn(2+) as a cofactor.

It catalyses the reaction adenosine + H2O + H(+) = inosine + NH4(+). The enzyme catalyses 2'-deoxyadenosine + H2O + H(+) = 2'-deoxyinosine + NH4(+). In terms of biological role, catalyzes the hydrolytic deamination of adenosine and 2-deoxyadenosine. This Streptococcus thermophilus (strain ATCC BAA-491 / LMD-9) protein is Adenosine deaminase.